The following is a 297-amino-acid chain: Cytosolic Fe-S cluster assembly factor CFD1 (297 aa).

15 to 22 (GKGGVGKS) serves as a coordination point for ATP. The [4Fe-4S] cluster site is built by C216 and C219.

Belongs to the Mrp/NBP35 ATP-binding proteins family. NUBP2/CFD1 subfamily. In terms of assembly, heterotetramer of 2 NBP35 and 2 CFD1 chains. It depends on [4Fe-4S] cluster as a cofactor.

The protein resides in the cytoplasm. Its function is as follows. Component of the cytosolic iron-sulfur (Fe/S) protein assembly (CIA) machinery. Required for maturation of extramitochondrial Fe-S proteins. The NBP35-CFD1 heterotetramer forms a Fe-S scaffold complex, mediating the de novo assembly of an Fe-S cluster and its transfer to target apoproteins. This Phaeosphaeria nodorum (strain SN15 / ATCC MYA-4574 / FGSC 10173) (Glume blotch fungus) protein is Cytosolic Fe-S cluster assembly factor CFD1.